Reading from the N-terminus, the 174-residue chain is Shikimate kinase 2 (174 aa).

12-17 (GAGKTT) provides a ligand contact to ATP. Mg(2+) is bound by residues Thr16 and Asp32. Substrate is bound by residues Asp34, Arg58, and Gly79. The interval 112-126 (EEYPQDTQRPTLTGR) is LID domain. Arg120 contacts ATP. Position 139 (Arg139) interacts with substrate.

This sequence belongs to the shikimate kinase family. AroL subfamily. As to quaternary structure, monomer. It depends on Mg(2+) as a cofactor.

It is found in the cytoplasm. It catalyses the reaction shikimate + ATP = 3-phosphoshikimate + ADP + H(+). It participates in metabolic intermediate biosynthesis; chorismate biosynthesis; chorismate from D-erythrose 4-phosphate and phosphoenolpyruvate: step 5/7. Its function is as follows. Catalyzes the specific phosphorylation of the 3-hydroxyl group of shikimic acid using ATP as a cosubstrate. This chain is Shikimate kinase 2, found in Serratia proteamaculans (strain 568).